The following is a 326-amino-acid chain: L-Ala--D-Glu endopeptidase (326 aa).

The signal sequence occupies residues 1–19 (MKVLLSALLLLLFAFEPSA). Positions 204, 208, 292, and 294 each coordinate Zn(2+).

The protein belongs to the peptidase M23B family. Requires Zn(2+) as cofactor.

Its function is as follows. L-Ala--D-Glu endopeptidase involved in production of single L-alanine side chains from tetrapeptides in the spore cortex peptidoglycan. Therefore, is required for the endospore cortex maturation. This Bacillus subtilis (strain 168) protein is L-Ala--D-Glu endopeptidase (lytH).